The sequence spans 264 residues: Anamorsin homolog 2 (264 aa).

An N-terminal SAM-like domain region spans residues 1–142 (MAATAAALAV…KVSWSMGSSF (142 aa)). A linker region spans residues 143-174 (PLKKATKGLPKIQIDDDSELIDEDSLLTEDDL). Residues Cys185, Cys194, Cys197, and Cys199 each coordinate [2Fe-2S] cluster. Residues 185–199 (CEVGATRKACKNCTC) form a fe-S binding site A region. 4 residues coordinate [4Fe-4S] cluster: Cys225, Cys228, Cys236, and Cys239. Short sequence motifs (cx2C motif) lie at residues 225–228 (CGNC) and 236–239 (CGTC). The tract at residues 225 to 239 (CGNCGLGDAFRCGTC) is fe-S binding site B.

It belongs to the anamorsin family. In terms of assembly, monomer. [2Fe-2S] cluster serves as cofactor. It depends on [4Fe-4S] cluster as a cofactor.

It is found in the cytoplasm. The protein localises to the mitochondrion intermembrane space. Functionally, component of the cytosolic iron-sulfur (Fe-S) protein assembly (CIA) machinery. Required for the maturation of extramitochondrial Fe-S proteins. Part of an electron transfer chain functioning in an early step of cytosolic Fe-S biogenesis, facilitating the de novo assembly of a [4Fe-4S] cluster on the cytosolic Fe-S scaffold complex. Electrons are transferred from NADPH via a FAD- and FMN-containing diflavin oxidoreductase. Together with the diflavin oxidoreductase, also required for the assembly of the diferric tyrosyl radical cofactor of ribonucleotide reductase (RNR), probably by providing electrons for reduction during radical cofactor maturation in the catalytic small subunit. This is Anamorsin homolog 2 from Oryza sativa subsp. indica (Rice).